A 435-amino-acid polypeptide reads, in one-letter code: RuBisCO large subunit-binding protein subunit beta-1 (435 aa).

The protein belongs to the chaperonin (HSP60) family. In terms of assembly, oligomer of probably six alpha and six beta subunits.

It localises to the plastid. Its subcellular location is the chloroplast. Its function is as follows. This protein binds RuBisCO small and large subunits and is implicated in the assembly of the enzyme oligomer. This Chlamydomonas reinhardtii (Chlamydomonas smithii) protein is RuBisCO large subunit-binding protein subunit beta-1.